The following is a 261-amino-acid chain: Ribosomal RNA small subunit methyltransferase A (261 aa).

Histidine 12, leucine 14, glycine 39, glutamate 60, aspartate 81, and asparagine 104 together coordinate S-adenosyl-L-methionine.

This sequence belongs to the class I-like SAM-binding methyltransferase superfamily. rRNA adenine N(6)-methyltransferase family. RsmA subfamily.

It is found in the cytoplasm. The enzyme catalyses adenosine(1518)/adenosine(1519) in 16S rRNA + 4 S-adenosyl-L-methionine = N(6)-dimethyladenosine(1518)/N(6)-dimethyladenosine(1519) in 16S rRNA + 4 S-adenosyl-L-homocysteine + 4 H(+). Its function is as follows. Specifically dimethylates two adjacent adenosines (A1518 and A1519) in the loop of a conserved hairpin near the 3'-end of 16S rRNA in the 30S particle. May play a critical role in biogenesis of 30S subunits. The polypeptide is Ribosomal RNA small subunit methyltransferase A (Albidiferax ferrireducens (strain ATCC BAA-621 / DSM 15236 / T118) (Rhodoferax ferrireducens)).